The following is a 334-amino-acid chain: Histo-blood group ABO system transferase 2 (334 aa).

The Cytoplasmic segment spans residues Met1–His15. The helical; Signal-anchor for type II membrane protein transmembrane segment at Leu16 to Leu36 threads the bilayer. Over Arg37–Asn334 the chain is Lumenal. Residue Asn94 is glycosylated (N-linked (GlcNAc...) asparagine). UDP-N-acetyl-alpha-D-galactosamine is bound by residues Phe102–Val104, Tyr107, and Asp192–Asp194. 2 residues coordinate Mn(2+): Asp192 and Asp194. Positions 214, 226, 284, and 307 each coordinate an alpha-L-fucosyl-(1-&gt;2)-beta-D-galactosyl derivative. Glu284 serves as the catalytic Nucleophile.

The protein belongs to the glycosyltransferase 6 family. Requires Mn(2+) as cofactor. Large intestine, caecum, stomach, pancreas, submaxillary gland and kidney (at protein level). Ubiquitous.

It is found in the golgi apparatus. The protein localises to the golgi stack membrane. The protein resides in the secreted. It catalyses the reaction an alpha-L-fucosyl-(1-&gt;2)-beta-D-galactosyl derivative + UDP-N-acetyl-alpha-D-galactosamine = an N-acetyl-alpha-D-galactosaminyl-(1-&gt;3)-[alpha-L-fucosyl-(1-&gt;2)]-beta-D-galactosyl derivative + UDP + H(+). The enzyme catalyses an alpha-L-fucosyl-(1-&gt;2)-beta-D-galactosyl derivative + UDP-alpha-D-galactose = an alpha-D-galactosyl-(1-&gt;3)-[alpha-L-fucosyl-(1-&gt;2)]-beta-D-galactosyl derivative + UDP + H(+). It functions in the pathway protein modification; protein glycosylation. Possesses strong B transferase activity and weak A transferase activity. The protein is Histo-blood group ABO system transferase 2 (Abo2) of Rattus norvegicus (Rat).